Here is a 100-residue protein sequence, read N- to C-terminus: Large ribosomal subunit protein uL23 (100 aa).

It belongs to the universal ribosomal protein uL23 family. As to quaternary structure, part of the 50S ribosomal subunit. Contacts protein L29, and trigger factor when it is bound to the ribosome.

In terms of biological role, one of the early assembly proteins it binds 23S rRNA. One of the proteins that surrounds the polypeptide exit tunnel on the outside of the ribosome. Forms the main docking site for trigger factor binding to the ribosome. In Baumannia cicadellinicola subsp. Homalodisca coagulata, this protein is Large ribosomal subunit protein uL23.